The primary structure comprises 344 residues: L-rhamnose-proton symporter (344 aa).

Transmembrane regions (helical) follow at residues 4-24 (PILLGIFWHFIGAASAACFYA), 38-58 (WSLGGFFSWIILPWSISWWLL), 68-88 (FDMATLLPIFLFGAMWGIGNI), 101-121 (MGIGIAIGVTLIIGTLMTPVL), 137-157 (TLLGVLVAVIGVAIVSYAGLL), 175-195 (LILAVMCGIFSAGMSFAMDAA), 214-234 (LPSYVVIMGGGAIVNLGFCFI), 255-275 (LIANALFAILGGVMWYLQFFF), 290-310 (ISWMLHMSFYVLCGGIVGLLF), and 324-344 (LVLGCVVIILAANIVGLGMAV).

The protein belongs to the L-rhamnose transporter (TC 2.A.7.6) family.

It is found in the cell inner membrane. It catalyses the reaction L-rhamnopyranose(in) + H(+)(in) = L-rhamnopyranose(out) + H(+)(out). Its function is as follows. Uptake of L-rhamnose across the cytoplasmic membrane with the concomitant transport of protons into the cell (symport system). This is L-rhamnose-proton symporter from Pectobacterium atrosepticum (strain SCRI 1043 / ATCC BAA-672) (Erwinia carotovora subsp. atroseptica).